Reading from the N-terminus, the 216-residue chain is Superoxide dismutase [Mn], mitochondrial (216 aa).

A mitochondrion-targeting transit peptide spans 1–18 (MSFLNRNLSRTIKAAVRG). H44, H92, D176, and H180 together coordinate Mn(2+).

It belongs to the iron/manganese superoxide dismutase family. Mn(2+) is required as a cofactor.

The protein resides in the mitochondrion matrix. The enzyme catalyses 2 superoxide + 2 H(+) = H2O2 + O2. Its function is as follows. Destroys superoxide anion radicals which are normally produced within the cells and which are toxic to biological systems. The sequence is that of Superoxide dismutase [Mn], mitochondrial (Sod2) from Glossina morsitans morsitans (Savannah tsetse fly).